The sequence spans 1381 residues: DNA-directed RNA polymerase subunit beta'' (1381 aa).

Cys-224, Cys-295, Cys-302, and Cys-305 together coordinate Zn(2+).

It belongs to the RNA polymerase beta' chain family. RpoC2 subfamily. As to quaternary structure, in plastids the minimal PEP RNA polymerase catalytic core is composed of four subunits: alpha, beta, beta', and beta''. When a (nuclear-encoded) sigma factor is associated with the core the holoenzyme is formed, which can initiate transcription. Requires Zn(2+) as cofactor.

It is found in the plastid. It localises to the chloroplast. The catalysed reaction is RNA(n) + a ribonucleoside 5'-triphosphate = RNA(n+1) + diphosphate. DNA-dependent RNA polymerase catalyzes the transcription of DNA into RNA using the four ribonucleoside triphosphates as substrates. The polypeptide is DNA-directed RNA polymerase subunit beta'' (Guizotia abyssinica (Niger)).